Here is a 443-residue protein sequence, read N- to C-terminus: Thymidine phosphorylase (443 aa).

It belongs to the thymidine/pyrimidine-nucleoside phosphorylase family. As to quaternary structure, homodimer.

It carries out the reaction thymidine + phosphate = 2-deoxy-alpha-D-ribose 1-phosphate + thymine. It functions in the pathway pyrimidine metabolism; dTMP biosynthesis via salvage pathway; dTMP from thymine: step 1/2. The enzymes which catalyze the reversible phosphorolysis of pyrimidine nucleosides are involved in the degradation of these compounds and in their utilization as carbon and energy sources, or in the rescue of pyrimidine bases for nucleotide synthesis. The chain is Thymidine phosphorylase from Shewanella pealeana (strain ATCC 700345 / ANG-SQ1).